A 352-amino-acid chain; its full sequence is NAD(P)H pyrophosphatase NUDT13, mitochondrial (352 aa).

The transit peptide at 1 to 20 (MSLYCGIACRRKFFWCYRLL) directs the protein to the mitochondrion. Residues 196-323 (PQMAPVAITL…PYTQQQNGTF (128 aa)) form the Nudix hydrolase domain. Positions 216-240 (RQSSFPKGMYSALAGFCDIGESVEE) match the Nudix box motif.

Belongs to the Nudix hydrolase family. Mg(2+) is required as a cofactor. Requires Mn(2+) as cofactor. In terms of tissue distribution, highly expressed in metastasis-suppressed chromosome 6 melanoma hybrids.

It localises to the mitochondrion. It catalyses the reaction NADH + H2O = reduced beta-nicotinamide D-ribonucleotide + AMP + 2 H(+). It carries out the reaction NAD(+) + H2O = beta-nicotinamide D-ribonucleotide + AMP + 2 H(+). The enzyme catalyses NADPH + H2O = reduced beta-nicotinamide D-ribonucleotide + adenosine 2',5'-bisphosphate + 2 H(+). Functionally, NAD(P)H pyrophosphatase that hydrolyzes NADH into NMNH and AMP, and NADPH into NMNH and 2',5'-ADP. Has a marked preference for the reduced pyridine nucleotides. Does not show activity toward NAD-capped RNAs; the NAD-cap is an atypical cap present at the 5'-end of some RNAs. The polypeptide is NAD(P)H pyrophosphatase NUDT13, mitochondrial (Homo sapiens (Human)).